Consider the following 485-residue polypeptide: GTPase Der (485 aa).

2 consecutive EngA-type G domains span residues 3-167 (PTIA…PEPE) and 176-349 (PVFA…NAAM). Residues 9–16 (GRPNVGKS), 56–60 (DTGGF), 119–122 (NKGE), 182–189 (GRPNVGKS), 229–233 (DTAGV), and 294–297 (NKWD) each bind GTP. The 85-residue stretch at 350–434 (IKMPTPKITR…PLRIQYNVSE (85 aa)) folds into the KH-like domain. Residues 435-485 (NPYENADDKPKKKPLRRVSLSNRIEKREGRKEEKNRFKKKTKVSVKKQFSK) are disordered. The segment covering 457-469 (RIEKREGRKEEKN) has biased composition (basic and acidic residues). Residues 470–485 (RFKKKTKVSVKKQFSK) show a composition bias toward basic residues.

This sequence belongs to the TRAFAC class TrmE-Era-EngA-EngB-Septin-like GTPase superfamily. EngA (Der) GTPase family. In terms of assembly, associates with the 50S ribosomal subunit.

Functionally, GTPase that plays an essential role in the late steps of ribosome biogenesis. This chain is GTPase Der, found in Neisseria meningitidis serogroup A / serotype 4A (strain DSM 15465 / Z2491).